The sequence spans 202 residues: Small ribosomal subunit protein uS4 (202 aa).

The region spanning 91–168 (SRLSSVLYNS…QKVPDYLEVD (78 aa)) is the S4 RNA-binding domain.

The protein belongs to the universal ribosomal protein uS4 family. Part of the 30S ribosomal subunit. Contacts protein S5. The interaction surface between S4 and S5 is involved in control of translational fidelity.

Its function is as follows. One of the primary rRNA binding proteins, it binds directly to 16S rRNA where it nucleates assembly of the body of the 30S subunit. With S5 and S12 plays an important role in translational accuracy. The polypeptide is Small ribosomal subunit protein uS4 (Ehrlichia chaffeensis (strain ATCC CRL-10679 / Arkansas)).